Reading from the N-terminus, the 357-residue chain is bZIP transcription factor 23 (357 aa).

The interval 166-185 is disordered; the sequence is PPVPPAPTPTAAAVPPPPPP. The bZIP domain occupies 275 to 338; sequence VERRQRRMIK…KNEVLERMSR (64 aa). The interval 277-296 is basic motif; the sequence is RRQRRMIKNRESAARSRQRK. Positions 303–317 are leucine-zipper; sequence LEAEVAKLKELNDEL.

It belongs to the bZIP family. ABI5 subfamily. Highly expressed in leaves.

Its subcellular location is the nucleus. In terms of biological role, transcriptional activator that mediates abscisic acid (ABA) signaling. Can regulate the expression of a wide spectrum of stress-related genes in response to abiotic stresses through an ABA-dependent regulation pathway. Confers ABA-dependent drought and salinity tolerance. Binds specifically to the ABA-responsive elements (ABRE) in the promoter of target genes to mediate stress-responsive ABA signaling. The sequence is that of bZIP transcription factor 23 from Oryza sativa subsp. japonica (Rice).